A 635-amino-acid chain; its full sequence is Cerevisin (635 aa).

Positions 1-19 (MKLENTLFTLGALGSISAA) are cleaved as a signal peptide. The propeptide occupies 20-280 (LVIPNLENAA…VERDSIVEAT (261 aa)). Basic and acidic residues-rich tracts occupy residues 35 to 50 (INKEDHHERPRKVEFT), 74 to 85 (KGQDKESPEFNG), 94 to 109 (SAHEGGKGMKPKHESS), and 126 to 136 (GCHENKVEEKK). The interval 35–155 (INKEDHHERP…KHHEKTLEKG (121 aa)) is disordered. The span at 137 to 155 (MKGKKVKGKKHHEKTLEKG) shows a compositional bias: basic residues. Residues 182–278 (RYIIVFKRGA…DFVERDSIVE (97 aa)) form the Inhibitor I9 domain. The region spanning 289-614 (PWGLARISHR…KQELNMDEFI (326 aa)) is the Peptidase S8 domain. Residues D325 and H357 each act as charge relay system in the active site. Residues C460 and C491 are joined by a disulfide bond. Catalysis depends on S519, which acts as the Charge relay system. Residues 575 to 635 (DTPNVLIYNG…RDILDKLNII (61 aa)) constitute a propeptide that is removed on maturation. N594 carries an N-linked (GlcNAc...) asparagine glycan.

This sequence belongs to the peptidase S8 family. Post-translationally, activated by N- and C-terminal proteolytic cleavage. Protease B (PrB/PRB1) processing requires at least 4 cleavages. First, the signal peptide is removed from the 76 kDa preproprotease B by signal peptidase in the ER. Then, PrB removes its own Pro-region (in trans) at the N-terminus, producing a 39 kDa form before exiting the ER. In the Golgi complex, the C-terminal Post-region of the 40 kDa proprotease B undergoes protease A (PrA/PEP4)-mediated processing to a 37 kDa intermediate, which in turn is quickly processed again by PrB in trans to yield the 31 kDa mature PrB. In terms of processing, glycosylated. Preproprotease B is a 76 kDa unglycosylated precursor that enters the endoplasmic reticulum (ER), where it receives one Asn-linked and an undetermined number of non-Asn-linked carbohydrate side chains. In the Golgi complex, the 39 kDa form becomes 40 kDa, due to elaboration of the Asn-linked side chain. The ultimate processing step removes a peptide containing the Asn-linked chain. Mature PrB has only non-Asn-linked carbohydrates.

It is found in the vacuole. It carries out the reaction Hydrolysis of proteins with broad specificity, and of Bz-Arg-OEt &gt; Ac-Tyr-OEt. Does not hydrolyze peptide amides.. Its function is as follows. Vacuolar proteinase B involved in protein degradation in the vacuole. Among other substrates, acts on carboxypeptidase Y (cpY/PRC1) to activate it by processing its Pro-peptide. Required for meiosis and spore formation, and for optimal survival in stationary phase. In Saccharomyces cerevisiae (strain ATCC 204508 / S288c) (Baker's yeast), this protein is Cerevisin (PRB1).